Here is a 508-residue protein sequence, read N- to C-terminus: Photosystem II CP47 reaction center protein (508 aa).

6 helical membrane passes run 21–36 (AVHI…WAGS), 101–115 (IVFS…IWHW), 140–156 (GIHL…FGAF), 203–218 (IAAG…FHLS), 237–252 (VLSS…AFVV), and 457–472 (TFAL…HGAR).

It belongs to the PsbB/PsbC family. PsbB subfamily. As to quaternary structure, PSII is composed of 1 copy each of membrane proteins PsbA, PsbB, PsbC, PsbD, PsbE, PsbF, PsbH, PsbI, PsbJ, PsbK, PsbL, PsbM, PsbT, PsbX, PsbY, PsbZ, Psb30/Ycf12, at least 3 peripheral proteins of the oxygen-evolving complex and a large number of cofactors. It forms dimeric complexes. Requires Binds multiple chlorophylls. PSII binds additional chlorophylls, carotenoids and specific lipids. as cofactor.

The protein localises to the plastid. It is found in the chloroplast thylakoid membrane. One of the components of the core complex of photosystem II (PSII). It binds chlorophyll and helps catalyze the primary light-induced photochemical processes of PSII. PSII is a light-driven water:plastoquinone oxidoreductase, using light energy to abstract electrons from H(2)O, generating O(2) and a proton gradient subsequently used for ATP formation. This chain is Photosystem II CP47 reaction center protein, found in Agrostis stolonifera (Creeping bentgrass).